Here is a 56-residue protein sequence, read N- to C-terminus: U-megalopygitoxin(2)-Mo9 (56 aa).

The signal sequence occupies residues methionine 1–proline 25. Glutamine 26 is subject to Pyrrolidone carboxylic acid. Threonine 55 is modified (threonine amide).

Belongs to the caterpillar 2 family. Post-translationally, contains 2 disulfide bonds. As to expression, expressed by the venom apparatus.

The protein resides in the secreted. Its function is as follows. Probable toxin. This Megalopyge opercularis (Southern flannel moth) protein is U-megalopygitoxin(2)-Mo9.